Consider the following 146-residue polypeptide: Protein JTB (146 aa).

Residues 1 to 30 (MLAGAGRPGLPQGRHLCWLLCAFTLKLCQA) form the signal peptide. At 31 to 105 (EAPVQEEKLS…CRSALMEQRL (75 aa)) the chain is on the extracellular side. The helical transmembrane segment at 106-126 (FWKFEGAVVCVALIFACLVII) threads the bilayer. The Cytoplasmic portion of the chain corresponds to 127–146 (RQRQLDRKALEKVRKQIESI).

It belongs to the JTB family. Interacts with AURKA, AURKB, BIRC5 and INCENP. May be a component of the CPC at least composed of BIRC5/survivin, CDCA8/borealin, INCENP and AURKB/Aurora-B. As to expression, ubiquitous. Expressed in all normal human tissues studied but overexpressed or underexpressed in many of their malignant counterparts.

The protein localises to the membrane. It localises to the mitochondrion. The protein resides in the cytoplasm. Its subcellular location is the cytoskeleton. It is found in the microtubule organizing center. The protein localises to the centrosome. It localises to the spindle. Required for normal cytokinesis during mitosis. Plays a role in the regulation of cell proliferation. May be a component of the chromosomal passenger complex (CPC), a complex that acts as a key regulator of mitosis. The CPC complex has essential functions at the centromere in ensuring correct chromosome alignment and segregation and is required for chromatin-induced microtubule stabilization and spindle assembly. Increases AURKB activity. Inhibits apoptosis induced by TGFB1. Overexpression induces swelling of mitochondria and reduces mitochondrial membrane potential. This Homo sapiens (Human) protein is Protein JTB (JTB).